The sequence spans 306 residues: Ribonuclease Z (306 aa).

His63, His65, Asp67, His68, His140, Asp211, and His269 together coordinate Zn(2+). The active-site Proton acceptor is Asp67.

It belongs to the RNase Z family. Homodimer. Requires Zn(2+) as cofactor.

It catalyses the reaction Endonucleolytic cleavage of RNA, removing extra 3' nucleotides from tRNA precursor, generating 3' termini of tRNAs. A 3'-hydroxy group is left at the tRNA terminus and a 5'-phosphoryl group is left at the trailer molecule.. In terms of biological role, zinc phosphodiesterase, which displays some tRNA 3'-processing endonuclease activity. Probably involved in tRNA maturation, by removing a 3'-trailer from precursor tRNA. The chain is Ribonuclease Z from Listeria welshimeri serovar 6b (strain ATCC 35897 / DSM 20650 / CCUG 15529 / CIP 8149 / NCTC 11857 / SLCC 5334 / V8).